We begin with the raw amino-acid sequence, 134 residues long: Large ribosomal subunit protein uL16c (134 aa).

The tract at residues 1–22 (MLSPKRTRFRKQHRGRMKGISH) is disordered.

The protein belongs to the universal ribosomal protein uL16 family. As to quaternary structure, part of the 50S ribosomal subunit.

Its subcellular location is the plastid. The protein resides in the chloroplast. In Nicotiana tabacum (Common tobacco), this protein is Large ribosomal subunit protein uL16c.